We begin with the raw amino-acid sequence, 444 residues long: Baeyer-Villiger oxidase ptaJ (444 aa).

The protein belongs to the questin oxidase family. NADPH serves as cofactor.

Its pathway is secondary metabolite biosynthesis. Baeyer-Villiger oxidase; part of the gene cluster that mediates the biosynthesis of pestheic acid, a diphenyl ether which is a biosynthetic precursor of the unique chloropupukeananes. The biosynthesis initiates from condensation of acetate and malonate units catalyzed by the non-reducing PKS ptaA. As the ptaA protein is TE/CLC domain-deficient, hydrolysis and Claisen cyclization of the polyketide could be catalyzed by ptaB containing a beta-lactamase domain. The ptaB protein might hydrolyze the thioester bond between the ACP of ptaA and the intermediate to release atrochrysone carboxylic acid, which is spontaneously dehydrated to form endocrocin anthrone. Endocrocin anthrone is then converted to endocrocin, catalyzed by the anthrone oxygenase ptaC. Spontaneous decarboxylation of endocrocin occurs to generate emodin. An O-methyltransferase (ptaH or ptaI) could methylate emodin to form physcion. PtaJ could then catalyze the oxidative cleavage of physcion, and rotation of the intermediate could then afford desmethylisosulochrin. PtaF, a putative NADH-dependent oxidoreductase, might also participate in the oxidative cleavage step. Desmethylisosulochrin is then transformed by another O-methyltransferase (ptaH or ptaI) to form isosulochrin. Chlorination of isosulochrin by ptaM in the cyclohexadienone B ring then produces chloroisosulochrin. PtaE is responsible for the oxidative coupling reactions of both benzophenones isosulouchrin and chloroisosulouchrin to RES-1214-1 and pestheic acid respectively, regardless of chlorination. The sequence is that of Baeyer-Villiger oxidase ptaJ from Pestalotiopsis fici (strain W106-1 / CGMCC3.15140).